A 410-amino-acid chain; its full sequence is Cysteine desulfurase IscS (410 aa).

Residues Ala-80–Thr-81, Asn-160, Gln-188, and Ser-208–His-210 contribute to the pyridoxal 5'-phosphate site. N6-(pyridoxal phosphate)lysine is present on Lys-211. Thr-248 contacts pyridoxal 5'-phosphate. Catalysis depends on Cys-334, which acts as the Cysteine persulfide intermediate. Cys-334 contacts [2Fe-2S] cluster.

This sequence belongs to the class-V pyridoxal-phosphate-dependent aminotransferase family. NifS/IscS subfamily. In terms of assembly, homodimer. Forms a heterotetramer with IscU, interacts with other sulfur acceptors. It depends on pyridoxal 5'-phosphate as a cofactor.

The protein resides in the cytoplasm. The catalysed reaction is (sulfur carrier)-H + L-cysteine = (sulfur carrier)-SH + L-alanine. It participates in cofactor biosynthesis; iron-sulfur cluster biosynthesis. In terms of biological role, master enzyme that delivers sulfur to a number of partners involved in Fe-S cluster assembly, tRNA modification or cofactor biosynthesis. Catalyzes the removal of elemental sulfur atoms from cysteine to produce alanine. Functions as a sulfur delivery protein for Fe-S cluster synthesis onto IscU, an Fe-S scaffold assembly protein, as well as other S acceptor proteins. The chain is Cysteine desulfurase IscS from Rickettsia prowazekii (strain Madrid E).